The chain runs to 399 residues: Subtilisin-like protease 4 (399 aa).

The first 19 residues, 1-19 (MVCLKTLSVFLAAFAAADA), serve as a signal peptide directing secretion. The propeptide occupies 20–118 (RAVFKTQGHK…VEQDQVVRIS (99 aa)). The Inhibitor I9 domain occupies 38–117 (YIVVMKDGVS…YVEQDQVVRI (80 aa)). Residues 128-399 (SWGLGRVSHR…NRLLYNGSGQ (272 aa)) form the Peptidase S8 domain. Catalysis depends on charge relay system residues Asp-160 and His-191. N-linked (GlcNAc...) asparagine glycans are attached at residues Asn-252 and Asn-308. Ser-346 acts as the Charge relay system in catalysis. Asn-395 is a glycosylation site (N-linked (GlcNAc...) asparagine).

It belongs to the peptidase S8 family.

It is found in the secreted. Secreted subtilisin-like serine protease with keratinolytic activity that contributes to pathogenicity. The chain is Subtilisin-like protease 4 (SUB4) from Arthroderma benhamiae (strain ATCC MYA-4681 / CBS 112371) (Trichophyton mentagrophytes).